The following is a 115-amino-acid chain: Cysteine-rich venom protein 5 (115 aa).

The signal sequence occupies residues 1–22 (MSKVMIIMLVGMIFAIISTVSG). 3 disulfide bridges follow: Cys-26–Cys-41, Cys-33–Cys-44, and Cys-40–Cys-51. Positions 54-115 (RIGPPINTQP…RKPTNRPRSH (62 aa)) are disordered. 2 stretches are compositionally biased toward basic residues: residues 68 to 77 (QPTRRTRGPK) and 86 to 115 (NRTR…PRSH).

In terms of tissue distribution, expressed by the venom gland.

It localises to the secreted. This is Cysteine-rich venom protein 5 from Pimpla hypochondriaca (Parasitoid wasp).